The sequence spans 137 residues: Probable 4-amino-4-deoxy-L-arabinose-phosphoundecaprenol flippase subunit ArnF (137 aa).

The Cytoplasmic segment spans residues 1–5; it reads MNVPR. A helical membrane pass occupies residues 6–26; the sequence is GWLAALGSVLLVSAAQLGMRW. At 27 to 44 the chain is on the periplasmic side; it reads GMSRLPLPEAWAGQTPEH. Residues 45–65 traverse the membrane as a helical segment; that stretch reads AALLAVALAVAAYAASLLCWL. At 66–76 the chain is on the cytoplasmic side; that stretch reads AALRHLPLGRA. Residues 77–97 form a helical membrane-spanning segment; sequence YSLLSASYALVYLLAASLPAF. Topologically, residues 98–100 are periplasmic; sequence EET. Residues 101-121 traverse the membrane as a helical segment; it reads FTTGKTLGVGLVVLGVLTVNA. The Cytoplasmic portion of the chain corresponds to 122-137; that stretch reads RRTAAAPAHHPSRKAL.

Belongs to the ArnF family. Heterodimer of ArnE and ArnF.

The protein localises to the cell inner membrane. It participates in bacterial outer membrane biogenesis; lipopolysaccharide biosynthesis. Its function is as follows. Translocates 4-amino-4-deoxy-L-arabinose-phosphoundecaprenol (alpha-L-Ara4N-phosphoundecaprenol) from the cytoplasmic to the periplasmic side of the inner membrane. This is Probable 4-amino-4-deoxy-L-arabinose-phosphoundecaprenol flippase subunit ArnF from Pseudomonas paraeruginosa (strain DSM 24068 / PA7) (Pseudomonas aeruginosa (strain PA7)).